We begin with the raw amino-acid sequence, 61 residues long: Overexpressed in colon carcinoma 1 protein homolog (61 aa).

Polar residues predominate over residues 1 to 13 (MGCGNSTAASTTP). The interval 1–61 (MGCGNSTAAS…AGQTASTHKE (61 aa)) is disordered. The segment covering 18–34 (SAKDVQDDSSMDEEKRR) has biased composition (basic and acidic residues). Residues 48 to 61 (TNETAGQTASTHKE) are compositionally biased toward polar residues.

This sequence belongs to the OCC1 family.

This chain is Overexpressed in colon carcinoma 1 protein homolog (si:dkey-261e22.4), found in Danio rerio (Zebrafish).